The following is a 396-amino-acid chain: L-cysteine desulfidase (396 aa).

The active-site Proton acceptor is cysteine 23. 3 residues coordinate [4Fe-4S] cluster: cysteine 288, cysteine 330, and cysteine 337.

The protein belongs to the L-cysteine desulfidase family. In terms of assembly, homotrimer. The cofactor is [4Fe-4S] cluster.

It catalyses the reaction L-cysteine + H2O = hydrogen sulfide + pyruvate + NH4(+) + H(+). Catalyzes the cleavage of L-cysteine to form 2-aminoprop-2-enoate and sulfide. The former then spontaneously hydrolyzes to pyruvate and NH(3). May be responsible for the production of sulfide required for the biosynthesis of iron-sulfur centers in this archaea. In Methanococcus maripaludis (strain C6 / ATCC BAA-1332), this protein is L-cysteine desulfidase.